The primary structure comprises 429 residues: Serine--tRNA ligase (429 aa).

L-serine is bound at residue 234–236; that stretch reads TSE. ATP is bound by residues 265-267 and V281; that span reads RKE. Residue E288 participates in L-serine binding. 352–355 is an ATP binding site; the sequence is ELVS. T389 contributes to the L-serine binding site.

The protein belongs to the class-II aminoacyl-tRNA synthetase family. Type-1 seryl-tRNA synthetase subfamily. As to quaternary structure, homodimer. The tRNA molecule probably binds across the dimer.

The enzyme catalyses tRNA(Ser) + L-serine + ATP = L-seryl-tRNA(Ser) + AMP + diphosphate + H(+). It carries out the reaction tRNA(Sec) + L-serine + ATP = L-seryl-tRNA(Sec) + AMP + diphosphate + H(+). Its pathway is aminoacyl-tRNA biosynthesis; selenocysteinyl-tRNA(Sec) biosynthesis; L-seryl-tRNA(Sec) from L-serine and tRNA(Sec): step 1/1. In terms of biological role, catalyzes the attachment of serine to tRNA(Ser). Is also probably able to aminoacylate tRNA(Sec) with serine, to form the misacylated tRNA L-seryl-tRNA(Sec), which will be further converted into selenocysteinyl-tRNA(Sec). The protein is Serine--tRNA ligase of Encephalitozoon cuniculi (strain GB-M1) (Microsporidian parasite).